The primary structure comprises 853 residues: MSAIENFDAHTPMMQQYLKLKAQHPEILLFYRMGDFYELFYDDAKRASQLLDISLTKRGASAGEPIPMAGIPYHAVENYLAKLVNQGESVAICEQIGDPATSKGPVERKVVRIVTPGTISDEALLQERQDNLLAAIWQDSKGFGYATLDISSGRFRLSEPADRETMAAELQRTNPAELLYAEDFAEMSLIEGRRGLRRRPLWEFEIDTARQQLNLQFGTRDLVGFGVENAPRGLCAAGCLLQYAKDTQRTTLPHIRSITMEREQDSIIMDAATRRNLEITQNLAGGAENTLASVLDCTVTPMGSRMLKRWLHMPVRDTRVLLERQQTIGALQDFTAELQPVLRQVGDLERILARLALRTARPRDLARMRHAFQQLPELRALLENVDSAPVQALREKMGEFAELRDLLERAIIDTPPVLVRDGGVIAPGYNEELDEWRALADGATDYLERLEVRERERTGLDTLKVGFNAVHGYYIQISRGQSHLAPINYMRRQTLKNAERYIIPELKEYEDKVLTSKGKALALEKQLYEELFDLLLPHLEALQQSASALAELDVLVNLAERAYTLNYTCPTFIDKPGIRITEGRHPVVEQVLNEPFIANPLNLSPQRRMLIITGPNMGGKSTYMRQTALIALMAYIGSYVPAQKVEIGPIDRIFTRVGAADDLASGRSTFMVEMTETANILHNATEYSLVLMDEIGRGTSTYDGLSLAWACAENLANKIKALTLFATHYFELTQLPEKMEGVANVHLDALEHGDTIAFMHSVQDGAASKSYGLAVAALAGVPKEVIKRARQKLRELESISPNAAATQVDGTQMSLLSVPEETSPAVEALENLDPDSLTPRQALEWIYRLKSLV.

614–621 lines the ATP pocket; sequence GPNMGGKS.

This sequence belongs to the DNA mismatch repair MutS family.

This protein is involved in the repair of mismatches in DNA. It is possible that it carries out the mismatch recognition step. This protein has a weak ATPase activity. In Escherichia coli (strain SMS-3-5 / SECEC), this protein is DNA mismatch repair protein MutS.